The chain runs to 451 residues: Trigger factor (451 aa).

One can recognise a PPIase FKBP-type domain in the interval 165–250; the sequence is DDKLTIDFEG…LHQIQAREVL (86 aa).

It belongs to the FKBP-type PPIase family. Tig subfamily.

The protein localises to the cytoplasm. It carries out the reaction [protein]-peptidylproline (omega=180) = [protein]-peptidylproline (omega=0). In terms of biological role, involved in protein export. Acts as a chaperone by maintaining the newly synthesized protein in an open conformation. Functions as a peptidyl-prolyl cis-trans isomerase. The sequence is that of Trigger factor from Helicobacter acinonychis (strain Sheeba).